Reading from the N-terminus, the 273-residue chain is Putative expansin-B2 (273 aa).

The N-terminal stretch at 1–29 (MTILVVDRYYMLMNLLFALTCLLLNLTHC) is a signal peptide. Asn-36 carries N-linked (GlcNAc...) asparagine glycosylation. Residues 65 to 173 (GGACGYGNAV…KKVECNYIGK (109 aa)) form the Expansin-like EG45 domain. Disulfide bonds link Cys-68–Cys-97, Cys-100–Cys-168, and Cys-105–Cys-111. The 84-residue stretch at 186-269 (NSFAVLVAYV…NWQPGAIYKS (84 aa)) folds into the Expansin-like CBD domain.

It belongs to the expansin family. Expansin B subfamily.

It is found in the secreted. It localises to the cell wall. Its subcellular location is the membrane. May cause loosening and extension of plant cell walls by disrupting non-covalent bonding between cellulose microfibrils and matrix glucans. No enzymatic activity has been found. The protein is Putative expansin-B2 (EXPB2) of Arabidopsis thaliana (Mouse-ear cress).